The sequence spans 276 residues: Syntaxin-12 (276 aa).

Ser-2 is modified (N-acetylserine). The Cytoplasmic segment spans residues 2–248 (SYGPLDMYRN…RAAYYQKKSR (247 aa)). The stretch at 33 to 131 (IQRISQATAQ…RRVSEKEKES (99 aa)) forms a coiled coil. Ser-139, Ser-142, Ser-218, and Ser-225 each carry phosphoserine. Residues 178–240 (LELIKERETA…ERATEQLQRA (63 aa)) form the t-SNARE coiled-coil homology domain. Residues 249–269 (KKMCILVLVLSVIIVILGLII) traverse the membrane as a helical; Anchor for type IV membrane protein segment. At 270 to 276 (WLVYKTK) the chain is on the vesicular side.

It belongs to the syntaxin family. Associates with the BLOC-1 complex. Interacts with BLOC1S6. Interacts with NAPA and SNAP23. Identified in a complex containing STX6, STX12, VAMP4 and VTI1A. Interacts with GRIPAP1. Forms a complex with GRIP1, GRIA2 and NSG1; controls the intracellular fate of AMPAR and the endosomal sorting of the GRIA2 subunit toward recycling and membrane targeting. Interacts with NSG1. Interacts with TPC1. Interacts (via N-terminus) with VPS13B.

Its subcellular location is the endosome membrane. The protein resides in the golgi apparatus membrane. It localises to the endomembrane system. The protein localises to the early endosome membrane. It is found in the recycling endosome membrane. Functionally, SNARE promoting fusion of transport vesicles with target membranes. Together with SNARE STX6, promotes movement of vesicles from endosomes to the cell membrane, and may therefore function in the endocytic recycling pathway. Through complex formation with GRIP1, GRIA2 and NSG1 controls the intracellular fate of AMPAR and the endosomal sorting of the GRIA2 subunit toward recycling and membrane targeting. In Pongo abelii (Sumatran orangutan), this protein is Syntaxin-12 (STX12).